Reading from the N-terminus, the 267-residue chain is tRNA pseudouridine synthase A (267 aa).

Asp54 (nucleophile) is an active-site residue. Residue Tyr114 participates in substrate binding.

This sequence belongs to the tRNA pseudouridine synthase TruA family. Homodimer.

It catalyses the reaction uridine(38/39/40) in tRNA = pseudouridine(38/39/40) in tRNA. Formation of pseudouridine at positions 38, 39 and 40 in the anticodon stem and loop of transfer RNAs. This is tRNA pseudouridine synthase A from Tropheryma whipplei (strain Twist) (Whipple's bacillus).